The sequence spans 182 residues: Homeobox expressed in ES cells 1-A (182 aa).

The segment at residues 103–163 (YRGRRPRTAF…QNRRAKLKRS (61 aa)) is a DNA-binding region (homeobox).

The protein belongs to the ANF homeobox family. Initially expressed in the anterior dorsal region of early embryos and later exclusively in the primordium of the anterior pituitary gland.

It localises to the nucleus. Appears to be involved in the regional specification of the anterior head of Xenopus embryos. This chain is Homeobox expressed in ES cells 1-A (hesx1-a), found in Xenopus laevis (African clawed frog).